Reading from the N-terminus, the 396-residue chain is Elongation factor Tu (396 aa).

One can recognise a tr-type G domain in the interval 10-206; sequence KPHVNIGTIG…AVDNYIPEPE (197 aa). The segment at 19–26 is G1; the sequence is GHVDHGKT. 19-26 serves as a coordination point for GTP; it reads GHVDHGKT. Threonine 26 is a Mg(2+) binding site. The tract at residues 60-64 is G2; the sequence is GITIA. The G3 stretch occupies residues 81 to 84; that stretch reads DCPG. GTP is bound by residues 81-85 and 136-139; these read DCPGH and NKAD. Residues 136–139 form a G4 region; it reads NKAD. Residues 174-176 are G5; the sequence is SAL.

Belongs to the TRAFAC class translation factor GTPase superfamily. Classic translation factor GTPase family. EF-Tu/EF-1A subfamily. As to quaternary structure, monomer.

It is found in the cytoplasm. It carries out the reaction GTP + H2O = GDP + phosphate + H(+). GTP hydrolase that promotes the GTP-dependent binding of aminoacyl-tRNA to the A-site of ribosomes during protein biosynthesis. This is Elongation factor Tu from Geobacter sulfurreducens (strain ATCC 51573 / DSM 12127 / PCA).